The chain runs to 732 residues: Glycine--tRNA ligase (732 aa).

The transit peptide at 1 to 27 directs the protein to the mitochondrion; sequence MRHVLSLVYKCSVFSKQVTVFSNHLRL. The WHEP-TRS domain maps to 61-117; it reads ILAPLRANVKEQGDLVRKLKEEKAPEIDIKKAVAELKTRKKILEDKELSLAPAEDLF. Glutamate 297 is a glycine binding site. Residues 329–331 and 340–341 each bind ATP; these read RNE and RV. Glutamate 348 lines the glycine pocket. Position 453 to 454 (453 to 454) interacts with ATP; that stretch reads EC. 572 to 574 is a glycine binding site; the sequence is EPS. Residue arginine 579 coordinates ATP.

Belongs to the class-II aminoacyl-tRNA synthetase family. Homodimer.

It is found in the mitochondrion. Its subcellular location is the cytoplasm. The protein resides in the cell projection. The protein localises to the axon. The enzyme catalyses tRNA(Gly) + glycine + ATP = glycyl-tRNA(Gly) + AMP + diphosphate. It carries out the reaction 2 ATP + H(+) = P(1),P(4)-bis(5'-adenosyl) tetraphosphate + diphosphate. Its function is as follows. Catalyzes the ATP-dependent ligation of glycine to the 3'-end of its cognate tRNA, via the formation of an aminoacyl-adenylate intermediate (Gly-AMP). Also produces diadenosine tetraphosphate (Ap4A), a universal pleiotropic signaling molecule needed for cell regulation pathways, by direct condensation of 2 ATPs. Thereby, may play a special role in Ap4A homeostasis. Required for terminal arborization of both dendrites and axons during development. The polypeptide is Glycine--tRNA ligase (Bombyx mori (Silk moth)).